The chain runs to 523 residues: Butyrophilin subfamily 2 member A2 (523 aa).

The N-terminal stretch at 1–32 (MEPAAALHFSLPASLLLLLLLLLLSLCALVSA) is a signal peptide. The Extracellular segment spans residues 33–265 (QFTVVGPANP…AVILTASPWM (233 aa)). Positions 34 to 145 (FTVVGPANPI…SYDEAILRLV (112 aa)) constitute an Ig-like V-type domain. N-linked (GlcNAc...) asparagine glycans are attached at residues Asn-50, Asn-118, Asn-220, and Asn-226. A disulfide bond links Cys-55 and Cys-129. In terms of domain architecture, Ig-like C2-type spans 153 to 234 (PLIEIKAQED…VNNTLLGQEK (82 aa)). The helical transmembrane segment at 266–286 (VSMTVILAVFIIFMAVSICCI) threads the bilayer. The stretch at 286-321 (IKKLQREKKILSGEKKVEQEEKEIAQQLQEELRWRR) forms a coiled coil. Residues 287-523 (KKLQREKKIL…LHRVGTHQSL (237 aa)) are Cytoplasmic-facing. Positions 309–502 (IAQQLQEELR…IFICPALTGA (194 aa)) constitute a B30.2/SPRY domain.

It belongs to the immunoglobulin superfamily. BTN/MOG family. N-glycosylated. Highly expressed in brain, bone marrow, small intestine, muscle, spleen and pancreas. Moderate expression was seen in lung, liver and kidney.

The protein resides in the membrane. In terms of biological role, inhibits the proliferation of CD4 and CD8 T-cells activated by anti-CD3 antibodies, T-cell metabolism and IL2 and IFNG secretion. The sequence is that of Butyrophilin subfamily 2 member A2 (BTN2A2) from Homo sapiens (Human).